The primary structure comprises 481 residues: Ammonium transporter 2 member 3 (481 aa).

The Extracellular segment spans residues 1 to 36 (MNFNSSKYISHLPESLLPNDASPEWNNKADNAWQLT). A glycan (N-linked (GlcNAc...) asparagine) is linked at Asn-4. A helical membrane pass occupies residues 37-57 (AATLVGLQTVPGLVILYGSMV). Residues 58 to 62 (KKKWA) are Cytoplasmic-facing. The chain crosses the membrane as a helical span at residues 63–83 (VNSAFMALYAFAAVLVCWVLW). At 84-123 (AHHMAFGTKLLPFVGKPNFALSQKFLLSKASTNYYLPMAD) the chain is on the extracellular side. A helical transmembrane segment spans residues 124-144 (FVFYQFAFAAITLVLLGGSLL). The Cytoplasmic segment spans residues 145-151 (GRMNFYA). Residues 152–172 (WMLFVPLWLTLSYTVGAFTIW) form a helical membrane-spanning segment. Residues 173–184 (GNGFLEGKIIDY) are Extracellular-facing. A helical membrane pass occupies residues 185–205 (AGGFVIHLSSGVAGFTAAYWV). Over 206–220 (GPRTSNDRQNFPPNN) the chain is Cytoplasmic. The chain crosses the membrane as a helical span at residues 221-241 (IIHMLGGAGFLWMGWTGFNGG). Over 242–248 (APFQVGE) the chain is Extracellular. A helical transmembrane segment spans residues 249 to 269 (ITSLAIFNTHLCTATSILVWI). Residues 270 to 281 (SLDMAVYKKGSL) lie on the Cytoplasmic side of the membrane. A helical transmembrane segment spans residues 282–302 (IGSVQGMMTGLVCITPGAGLV). Residues 303 to 304 (DP) are Extracellular-facing. Residues 305-325 (WAAILMGALSGSIPWYTMMVL) traverse the membrane as a helical segment. Residues 326-338 (HKKSPFFQSVDDT) are Cytoplasmic-facing. The helical transmembrane segment at 339–359 (LGVFHTHAVAGILGGILSGVF) threads the bilayer. Topologically, residues 360–363 (AKPK) are extracellular. Residues 364-381 (LLRILYGPYGSGLLYSYF) traverse the membrane as a helical segment. Residues 382–395 (DDNIGQGIKQMWYQ) lie on the Cytoplasmic side of the membrane. The helical transmembrane segment at 396-416 (LLGAVFITIWNVVITSLICIL) threads the bilayer. The Extracellular segment spans residues 417–481 (LNRFVNLRMQ…HSFPINKIDE (65 aa)).

This sequence belongs to the ammonia transporter channel (TC 1.A.11.2) family. Mostly expressed in mycorrhizal roots. Also observed in the cortex and endodermis of non-mycorrhizal roots.

Its subcellular location is the cell membrane. Functionally, involved in ammonium transport. Required for arbuscular mycorrhizal (AM) symbiosis with AM fungi (e.g. Glomus versiforme and G.intraradices) in low nitrogen conditions. This chain is Ammonium transporter 2 member 3, found in Medicago truncatula (Barrel medic).